Reading from the N-terminus, the 650-residue chain is DNA mismatch repair protein MutL (650 aa).

The interval 374–420 (SSLPDTQRSQRQPEKAASGQRSSVDAGLSQGSSAHRASQTGLGQSGN) is disordered. Polar residues predominate over residues 392 to 420 (GQRSSVDAGLSQGSSAHRASQTGLGQSGN).

The protein belongs to the DNA mismatch repair MutL/HexB family.

In terms of biological role, this protein is involved in the repair of mismatches in DNA. It is required for dam-dependent methyl-directed DNA mismatch repair. May act as a 'molecular matchmaker', a protein that promotes the formation of a stable complex between two or more DNA-binding proteins in an ATP-dependent manner without itself being part of a final effector complex. The sequence is that of DNA mismatch repair protein MutL from Shewanella amazonensis (strain ATCC BAA-1098 / SB2B).